A 199-amino-acid chain; its full sequence is Ubiquitin-conjugating enzyme E2-22 kDa (199 aa).

Residues 4-154 form the UBC core domain; that stretch reads MAVSRIKREF…AKHWTNAYAG (151 aa). C92 functions as the Glycyl thioester intermediate in the catalytic mechanism. A UBA domain is found at 161-199; sequence DCDSKIQRLRDMGIDEHEARAVLSKENWNLEKATEGLFS.

This sequence belongs to the ubiquitin-conjugating enzyme family. In terms of assembly, interacts with Rpn10. As to expression, during gastrulation, expression is highest in the invaginating posterior midgut primordium (PMG), high expression is also observed in the cephalic furrow and ventral ectodermal neurogenic region. In stage 10-11 embryos, expression is high in the pole cells present in the pocket formed by the PMG. During germ band retraction, expression appears to reinitiate in many tissues, especially the gut and nervous system. After dorsal closure, expression is detectable at low levels throughout the embryo.

The enzyme catalyses S-ubiquitinyl-[E1 ubiquitin-activating enzyme]-L-cysteine + [E2 ubiquitin-conjugating enzyme]-L-cysteine = [E1 ubiquitin-activating enzyme]-L-cysteine + S-ubiquitinyl-[E2 ubiquitin-conjugating enzyme]-L-cysteine.. It participates in protein modification; protein ubiquitination. In terms of biological role, catalyzes the covalent attachment of ubiquitin to other proteins. The sequence is that of Ubiquitin-conjugating enzyme E2-22 kDa from Drosophila melanogaster (Fruit fly).